We begin with the raw amino-acid sequence, 327 residues long: Aspartate--ammonia ligase (327 aa).

The protein belongs to the class-II aminoacyl-tRNA synthetase family. AsnA subfamily.

Its subcellular location is the cytoplasm. It carries out the reaction L-aspartate + NH4(+) + ATP = L-asparagine + AMP + diphosphate + H(+). Its pathway is amino-acid biosynthesis; L-asparagine biosynthesis; L-asparagine from L-aspartate (ammonia route): step 1/1. The polypeptide is Aspartate--ammonia ligase (Mycoplasmoides gallisepticum (strain R(low / passage 15 / clone 2)) (Mycoplasma gallisepticum)).